Consider the following 211-residue polypeptide: Dephospho-CoA kinase (211 aa).

One can recognise a DPCK domain in the interval 7–211 (LIGVIGRSGA…ILTRRGVLGE (205 aa)). 15-20 (GAGKNV) contacts ATP.

The protein belongs to the CoaE family.

The protein localises to the cytoplasm. It catalyses the reaction 3'-dephospho-CoA + ATP = ADP + CoA + H(+). The protein operates within cofactor biosynthesis; coenzyme A biosynthesis; CoA from (R)-pantothenate: step 5/5. Its function is as follows. Catalyzes the phosphorylation of the 3'-hydroxyl group of dephosphocoenzyme A to form coenzyme A. This chain is Dephospho-CoA kinase, found in Treponema pallidum (strain Nichols).